The chain runs to 158 residues: SsrA-binding protein (158 aa).

It belongs to the SmpB family.

The protein localises to the cytoplasm. Its function is as follows. Required for rescue of stalled ribosomes mediated by trans-translation. Binds to transfer-messenger RNA (tmRNA), required for stable association of tmRNA with ribosomes. tmRNA and SmpB together mimic tRNA shape, replacing the anticodon stem-loop with SmpB. tmRNA is encoded by the ssrA gene; the 2 termini fold to resemble tRNA(Ala) and it encodes a 'tag peptide', a short internal open reading frame. During trans-translation Ala-aminoacylated tmRNA acts like a tRNA, entering the A-site of stalled ribosomes, displacing the stalled mRNA. The ribosome then switches to translate the ORF on the tmRNA; the nascent peptide is terminated with the 'tag peptide' encoded by the tmRNA and targeted for degradation. The ribosome is freed to recommence translation, which seems to be the essential function of trans-translation. This chain is SsrA-binding protein, found in Caldanaerobacter subterraneus subsp. tengcongensis (strain DSM 15242 / JCM 11007 / NBRC 100824 / MB4) (Thermoanaerobacter tengcongensis).